Here is a 115-residue protein sequence, read N- to C-terminus: Large ribosomal subunit protein bL19 (115 aa).

It belongs to the bacterial ribosomal protein bL19 family. As to quaternary structure, part of the 50S ribosomal subunit.

Functionally, this protein is located at the 30S-50S ribosomal subunit interface and may play a role in the structure and function of the aminoacyl-tRNA binding site. In Bacillus subtilis (strain 168), this protein is Large ribosomal subunit protein bL19 (rplS).